Here is an 829-residue protein sequence, read N- to C-terminus: High affinity cAMP-specific and IBMX-insensitive 3',5'-cyclic phosphodiesterase 8A (829 aa).

Positions 16–46 (EDAPSPAAPPLSSGGPRLPQGQKTAALPRTR) are disordered. At S20 the chain carries Phosphoserine. Residues 213–283 (ACNSVFTALE…DTINSCIRIG (71 aa)) form the PAS domain. Residues 287-329 (QGIYYAKKKNGDNIQQNVKIIPVIGQGGKIRHYVSIIRVCNGN) form the PAC domain. The interval 341-360 (SDTHTDNQTGKHKDRRKGSL) is disordered. A Phosphoserine; by PKA modification is found at S359. S386 and S457 each carry phosphoserine. Residues 454–461 (RRLSGNEY) are involved in RAF1-binding. At Y461 the chain carries Phosphotyrosine. The PDEase domain maps to 480–820 (SLDDVPPRIA…KYWKGLDEMK (341 aa)). Residue H556 is the Proton donor of the active site. 4 residues coordinate a divalent metal cation: H560, H596, D597, and D726.

It belongs to the cyclic nucleotide phosphodiesterase family. PDE8 subfamily. Interacts with RAF1. The interaction promotes RAF1 activity. A divalent metal cation is required as a cofactor. Phosphorylated at Ser-359 by PKA under elevated cAMP conditions, this enhances catalytic activity. As to expression, expressed in most tissues except thymus and peripheral blood leukocytes. Highest levels in testis, ovary, small intestine and colon.

The enzyme catalyses 3',5'-cyclic AMP + H2O = AMP + H(+). It participates in purine metabolism; 3',5'-cyclic AMP degradation; AMP from 3',5'-cyclic AMP: step 1/1. With respect to regulation, inhibited by dipyridimole. Insensitive to selective PDE inhibitors including rolipram and zaprinast as well as to the non-selective inhibitor, IBMX. Unaffected by cGMP. Hydrolyzes the second messenger cAMP, which is a key regulator of many important physiological processes. May be involved in maintaining basal levels of the cyclic nucleotide and/or in the cAMP regulation of germ cell development. Binding to RAF1 reduces RAF1 'Ser-259' inhibitory-phosphorylation and stimulates RAF1-dependent EGF-activated ERK-signaling. Protects against cell death induced by hydrogen peroxide and staurosporine. The protein is High affinity cAMP-specific and IBMX-insensitive 3',5'-cyclic phosphodiesterase 8A (PDE8A) of Homo sapiens (Human).